The sequence spans 121 residues: Large ribosomal subunit protein uL24 (121 aa).

The interval 1-23 (MVRIESSQPRKQRKARYDAPSHM) is disordered.

This sequence belongs to the universal ribosomal protein uL24 family. In terms of assembly, part of the 50S ribosomal subunit.

In terms of biological role, one of two assembly initiator proteins, it binds directly to the 5'-end of the 23S rRNA, where it nucleates assembly of the 50S subunit. Its function is as follows. Located at the polypeptide exit tunnel on the outside of the subunit. In Methanoregula boonei (strain DSM 21154 / JCM 14090 / 6A8), this protein is Large ribosomal subunit protein uL24.